The following is a 571-amino-acid chain: MCAPGYHRFWFHWGLLLLLLLEAPLRGLALPPIRYSHAGICPNDMNPNLWVDAQSTCKRECETDQECETYEKCCPNVCGTKSCVAARYMDVKGKKGPVGMPKEATCDHFMCLQQGSECDIWDGQPVCKCKDRCEKEPSFTCASDGLTYYNRCFMDAEACSKGITLSVVTCRYHFTWPNTSPPPPETTVHPTTASPETLGLDMAAPALLNHPVHQSVTVGETVSFLCDVVGRPRPELTWEKQLEDRENVVMRPNHVRGNVVVTNIAQLVIYNVQPQDAGIYTCTARNVAGVLRADFPLSVVRGGQARATSESSLNGTAFPATECLKPPDSEDCGEEQTRWHFDAQANNCLTFTFGHCHHNLNHFETYEACMLACMSGPLAICSLPALQGPCKAYVPRWAYNSQTGLCQSFVYGGCEGNGNNFESREACEESCPFPRGNQHCRACKPRQKLVTSFCRSDFVILGRVSELTEEQDSGRALVTVDEVLKDEKMGLKFLGREPLEVTLLHVDWTCPCPNVTVGETPLIIMGEVDGGMAMLRPDSFVGASSTRRVRKLREVMYKKTCDVLKDFLGLQ.

The signal sequence occupies residues 1–29 (MCAPGYHRFWFHWGLLLLLLLEAPLRGLA). The region spanning 34–87 (RYSHAGICPNDMNPNLWVDAQSTCKRECETDQECETYEKCCPNVCGTKSCVAAR) is the WAP domain. Disulfide bonds link C41–C74, C57–C78, C61–C73, C67–C83, C129–C159, C133–C152, C141–C170, and C226–C282. The region spanning 121-172 (WDGQPVCKCKDRCEKEPSFTCASDGLTYYNRCFMDAEACSKGITLSVVTCRY) is the Kazal-like domain. An Ig-like C2-type domain is found at 205-298 (PALLNHPVHQ…GVLRADFPLS (94 aa)). N314 carries an N-linked (GlcNAc...) asparagine glycan. Intrachain disulfides connect C323–C373, C332–C356, C348–C369, C381–C431, C390–C414, C406–C427, C440–C510, C443–C512, and C454–C561. BPTI/Kunitz inhibitor domains lie at 323–373 (CLKP…MLAC) and 381–431 (CSLP…EESC). The 122-residue stretch at 440 to 561 (CRACKPRQKL…LREVMYKKTC (122 aa)) folds into the NTR domain. N-linked (GlcNAc...) asparagine glycosylation occurs at N514.

The protein belongs to the WFIKKN family. In terms of assembly, interacts with both mature and propeptide myostatin/MSTN. Widely expressed, with high expression in skeletal muscle and heart. Also expressed in brain, lung and testis. Weakly expressed in liver and kidney.

Its subcellular location is the secreted. In terms of biological role, protease-inhibitor that contains multiple distinct protease inhibitor domains. Probably has serine protease- and metalloprotease-inhibitor activity. Inhibits the biological activity of mature myostatin, but not activin. The polypeptide is WAP, Kazal, immunoglobulin, Kunitz and NTR domain-containing protein 2 (Wfikkn2) (Mus musculus (Mouse)).